Here is a 396-residue protein sequence, read N- to C-terminus: Agropine synthesis cyclase (396 aa).

It belongs to the peptidase M24B family.

This chain is Agropine synthesis cyclase (ags), found in Rhizobium rhizogenes (Agrobacterium rhizogenes).